The sequence spans 469 residues: UDP-N-acetylmuramate--L-alanine ligase (469 aa).

An ATP-binding site is contributed by 118-124 (GTHGKTT).

The protein belongs to the MurCDEF family.

Its subcellular location is the cytoplasm. It carries out the reaction UDP-N-acetyl-alpha-D-muramate + L-alanine + ATP = UDP-N-acetyl-alpha-D-muramoyl-L-alanine + ADP + phosphate + H(+). Its pathway is cell wall biogenesis; peptidoglycan biosynthesis. Cell wall formation. This chain is UDP-N-acetylmuramate--L-alanine ligase, found in Ruegeria sp. (strain TM1040) (Silicibacter sp.).